A 523-amino-acid chain; its full sequence is GMP synthase [glutamine-hydrolyzing] (523 aa).

The region spanning 8–205 (KILILDFGSQ…VVNICGCETK (198 aa)) is the Glutamine amidotransferase type-1 domain. Catalysis depends on Cys-85, which acts as the Nucleophile. Active-site residues include His-179 and Glu-181. The GMPS ATP-PPase domain occupies 206-398 (WTAENIIEDA…LGLPAEMINR (193 aa)). An ATP-binding site is contributed by 233 to 239 (SGGVDSS).

Homodimer.

It carries out the reaction XMP + L-glutamine + ATP + H2O = GMP + L-glutamate + AMP + diphosphate + 2 H(+). The protein operates within purine metabolism; GMP biosynthesis; GMP from XMP (L-Gln route): step 1/1. In terms of biological role, catalyzes the synthesis of GMP from XMP. In Haemophilus influenzae (strain PittGG), this protein is GMP synthase [glutamine-hydrolyzing].